A 97-amino-acid chain; its full sequence is MHRILAEKSVNITELRKNPAKYFIDQPVAVLSNNRPAGYLLSASAFEALMDMLAEQEEKKPIKARFRPSAARLEEITRRAEQYLNDMTDDDFNDFKE.

This sequence belongs to the phD/YefM antitoxin family. As to quaternary structure, probably forms a complex with the mRNA interferase YafO which inhibits the mRNA interferase activity.

Antitoxin component of a type II toxin-antitoxin (TA) system. Functions as an mRNA interferase antitoxin; overexpression prevents YafO-mediated cessation of cell growth and inhibition of cell proliferation. In Escherichia coli (strain K12), this protein is Antitoxin YafN (yafN).